Consider the following 292-residue polypeptide: 33 kDa chaperonin (292 aa).

Cystine bridges form between Cys230-Cys232 and Cys263-Cys266.

This sequence belongs to the HSP33 family. In terms of processing, under oxidizing conditions two disulfide bonds are formed involving the reactive cysteines. Under reducing conditions zinc is bound to the reactive cysteines and the protein is inactive.

It is found in the cytoplasm. In terms of biological role, redox regulated molecular chaperone. Protects both thermally unfolding and oxidatively damaged proteins from irreversible aggregation. Plays an important role in the bacterial defense system toward oxidative stress. In Escherichia coli O17:K52:H18 (strain UMN026 / ExPEC), this protein is 33 kDa chaperonin.